Here is a 353-residue protein sequence, read N- to C-terminus: MEKIQKITYKELVAEKVNDFNTTFVIEPLARGYANTMGTVLRRTLLSSITSVAPFAIKINNVEHEFQTISGLKEDAITLVRNIRNIRFVYNEEIFEKENLAKISFKTNKEGEIFASDIPEVSGLEIVNKDQYIANIAKGGSLEFDLFLRKGRGFIDFEENKNVISQYGSRLESSIKNGQFLAMDSDFSPVKKCAISFEELNSSSKLIEERLKIKIETDCTVSAKEAIEQAAKIIVAHFQIIGNINALETIELFEENKEKKEREIKSTTPITKLGLSVRSENALRRAKYNTVEEVLGLSDEELSNIKNLGKKSIQDIIEKRNEWKERIGYDDGQSDNFIIESLDQLNNSEEGEE.

The segment at 1–245 (MEKIQKITYK…AHFQIIGNIN (245 aa)) is alpha N-terminal domain (alpha-NTD). Residues 261–353 (EREIKSTTPI…QLNNSEEGEE (93 aa)) form an alpha C-terminal domain (alpha-CTD) region.

This sequence belongs to the RNA polymerase alpha chain family. Homodimer. The RNAP catalytic core consists of 2 alpha, 1 beta, 1 beta' and 1 omega subunit. When a sigma factor is associated with the core the holoenzyme is formed, which can initiate transcription.

The enzyme catalyses RNA(n) + a ribonucleoside 5'-triphosphate = RNA(n+1) + diphosphate. Its function is as follows. DNA-dependent RNA polymerase catalyzes the transcription of DNA into RNA using the four ribonucleoside triphosphates as substrates. This is DNA-directed RNA polymerase subunit alpha from Mycoplasma sp.